Reading from the N-terminus, the 435-residue chain is Putrescine transporter PotE (435 aa).

12 helical membrane-spanning segments follow: residues 8-28 (IGVV…GIIM), 39-59 (ISIV…YAFA), 95-115 (LVIA…ELFG), 117-137 (ILSP…ATVL), 148-168 (ISSF…IIGW), 185-205 (VPTF…FLGL), 224-244 (IAVL…TNVI), 275-295 (VIMG…QFTI), 320-340 (APVV…LMTI), 354-374 (LAVV…AVLL), 386-406 (TTVF…YAAG), and 409-429 (AMLY…FVSY).

The protein belongs to the amino acid-polyamine-organocation (APC) superfamily. Basic amino acid/polyamine antiporter (APA) (TC 2.A.3.2) family.

The protein resides in the cell inner membrane. The catalysed reaction is putrescine(in) + H(+)(in) = putrescine(out) + H(+)(out). It carries out the reaction putrescine(in) + L-ornithine(out) = putrescine(out) + L-ornithine(in). Catalyzes both the uptake and excretion of putrescine. The uptake of putrescine is dependent on the membrane potential and the excretion involves putrescine-ornithine antiporter activity. This is Putrescine transporter PotE from Haemophilus influenzae (strain ATCC 51907 / DSM 11121 / KW20 / Rd).